We begin with the raw amino-acid sequence, 157 residues long: Small ribosomal subunit protein uS7 (157 aa).

It belongs to the universal ribosomal protein uS7 family. In terms of assembly, part of the 30S ribosomal subunit. Contacts proteins S9 and S11.

In terms of biological role, one of the primary rRNA binding proteins, it binds directly to 16S rRNA where it nucleates assembly of the head domain of the 30S subunit. Is located at the subunit interface close to the decoding center, probably blocks exit of the E-site tRNA. The sequence is that of Small ribosomal subunit protein uS7 from Caldicellulosiruptor saccharolyticus (strain ATCC 43494 / DSM 8903 / Tp8T 6331).